The following is a 178-amino-acid chain: Cytidylate kinase 2 (178 aa).

7–15 (GKSGCGNTT) provides a ligand contact to ATP.

It belongs to the cytidylate kinase family. Type 2 subfamily.

It localises to the cytoplasm. It catalyses the reaction CMP + ATP = CDP + ADP. It carries out the reaction dCMP + ATP = dCDP + ADP. In Borreliella afzelii (strain PKo) (Borrelia afzelii), this protein is Cytidylate kinase 2.